A 306-amino-acid polypeptide reads, in one-letter code: Probable GTP 3',8-cyclase (306 aa).

The region spanning 5 to 232 is the Radical SAM core domain; it reads RFGRPVTNLR…RRRKYFLPVD (228 aa). Arginine 14 contributes to the GTP binding site. [4Fe-4S] cluster-binding residues include cysteine 21 and cysteine 25. Tyrosine 27 is an S-adenosyl-L-methionine binding site. Cysteine 28 lines the [4Fe-4S] cluster pocket. Lysine 61 contributes to the GTP binding site. Glycine 65 contacts S-adenosyl-L-methionine. Threonine 90 lines the GTP pocket. Serine 114 serves as a coordination point for S-adenosyl-L-methionine. Residue lysine 150 coordinates GTP. Methionine 189 contacts S-adenosyl-L-methionine. Cysteine 250 and cysteine 253 together coordinate [4Fe-4S] cluster. 255–257 contributes to the GTP binding site; the sequence is RLR. Cysteine 267 contributes to the [4Fe-4S] cluster binding site.

It belongs to the radical SAM superfamily. MoaA family. The cofactor is [4Fe-4S] cluster.

It catalyses the reaction GTP + AH2 + S-adenosyl-L-methionine = (8S)-3',8-cyclo-7,8-dihydroguanosine 5'-triphosphate + 5'-deoxyadenosine + L-methionine + A + H(+). The protein operates within cofactor biosynthesis; molybdopterin biosynthesis. Functionally, catalyzes the cyclization of GTP to (8S)-3',8-cyclo-7,8-dihydroguanosine 5'-triphosphate. This chain is Probable GTP 3',8-cyclase, found in Pyrococcus abyssi (strain GE5 / Orsay).